Reading from the N-terminus, the 441-residue chain is Capsid vertex component 1 (441 aa).

This sequence belongs to the herpesviridae CVC1 protein family. Interacts (via C-terminus) with capsid vertex component 2/CVC2.

It is found in the virion. It localises to the host nucleus. In terms of biological role, capsid vertex-specific component that plays a role during viral DNA encapsidation, assuring correct genome cleavage and presumably stabilizing capsids that contain full-length viral genomes. In Saimiriine herpesvirus 2 (strain 11) (SaHV-2), this protein is Capsid vertex component 1.